We begin with the raw amino-acid sequence, 400 residues long: Enoyl-[acyl-carrier-protein] reductase [NADH] (400 aa).

NAD(+)-binding positions include 48 to 53 (GSSSGY), 74 to 75 (FE), 111 to 112 (DA), and 139 to 140 (LA). Tyrosine 225 provides a ligand contact to substrate. Tyrosine 235 serves as the catalytic Proton donor. NAD(+) is bound by residues lysine 244 and 273–275 (VVT).

It belongs to the TER reductase family. As to quaternary structure, monomer.

The catalysed reaction is a 2,3-saturated acyl-[ACP] + NAD(+) = a (2E)-enoyl-[ACP] + NADH + H(+). Its pathway is lipid metabolism; fatty acid biosynthesis. Functionally, involved in the final reduction of the elongation cycle of fatty acid synthesis (FAS II). Catalyzes the reduction of a carbon-carbon double bond in an enoyl moiety that is covalently linked to an acyl carrier protein (ACP). In Shewanella frigidimarina (strain NCIMB 400), this protein is Enoyl-[acyl-carrier-protein] reductase [NADH].